Reading from the N-terminus, the 450-residue chain is Chromosomal replication initiator protein DnaA (450 aa).

The tract at residues 1 to 71 (MEDVWLQAQS…SVRSLTDSHF (71 aa)) is domain I, interacts with DnaA modulators. The segment at 71–113 (FQVELQVAARQQEKTAKSPRKSHTEDELGPVESEKCAPAEFST) is domain II. Positions 82-103 (QEKTAKSPRKSHTEDELGPVES) are disordered. A domain III, AAA+ region region spans residues 114 to 330 (NLNAKYTFDT…GMLIRLGAVA (217 aa)). ATP is bound by residues G158, G160, K161, and T162. The segment at 331–450 (SLTGKNITLD…IETLRKGLLN (120 aa)) is domain IV, binds dsDNA.

Belongs to the DnaA family. As to quaternary structure, oligomerizes as a right-handed, spiral filament on DNA at oriC.

The protein resides in the cytoplasm. In terms of biological role, plays an essential role in the initiation and regulation of chromosomal replication. ATP-DnaA binds to the origin of replication (oriC) to initiate formation of the DNA replication initiation complex once per cell cycle. Binds the DnaA box (a 9 base pair repeat at the origin) and separates the double-stranded (ds)DNA. Forms a right-handed helical filament on oriC DNA; dsDNA binds to the exterior of the filament while single-stranded (ss)DNA is stabiized in the filament's interior. The ATP-DnaA-oriC complex binds and stabilizes one strand of the AT-rich DNA unwinding element (DUE), permitting loading of DNA polymerase. After initiation quickly degrades to an ADP-DnaA complex that is not apt for DNA replication. Binds acidic phospholipids. The protein is Chromosomal replication initiator protein DnaA of Geobacter metallireducens (strain ATCC 53774 / DSM 7210 / GS-15).